Here is a 250-residue protein sequence, read N- to C-terminus: Hydroxyacylglutathione hydrolase (250 aa).

Zn(2+)-binding residues include H52, H54, D56, H57, H107, D128, and H166.

The protein belongs to the metallo-beta-lactamase superfamily. Glyoxalase II family. Monomer. Zn(2+) is required as a cofactor.

It carries out the reaction an S-(2-hydroxyacyl)glutathione + H2O = a 2-hydroxy carboxylate + glutathione + H(+). The protein operates within secondary metabolite metabolism; methylglyoxal degradation; (R)-lactate from methylglyoxal: step 2/2. In terms of biological role, thiolesterase that catalyzes the hydrolysis of S-D-lactoyl-glutathione to form glutathione and D-lactic acid. This chain is Hydroxyacylglutathione hydrolase, found in Neisseria gonorrhoeae (strain ATCC 700825 / FA 1090).